The following is a 518-amino-acid chain: Glutamate--cysteine ligase (518 aa).

Belongs to the glutamate--cysteine ligase type 1 family. Type 1 subfamily.

It catalyses the reaction L-cysteine + L-glutamate + ATP = gamma-L-glutamyl-L-cysteine + ADP + phosphate + H(+). It functions in the pathway sulfur metabolism; glutathione biosynthesis; glutathione from L-cysteine and L-glutamate: step 1/2. This Cronobacter sakazakii (strain ATCC BAA-894) (Enterobacter sakazakii) protein is Glutamate--cysteine ligase.